The primary structure comprises 504 residues: Cobyric acid synthase (504 aa).

In terms of domain architecture, GATase cobBQ-type spans 254–442; it reads AIDVAVIRYP…MHDLFHNDMF (189 aa). Cys336 acts as the Nucleophile in catalysis. His434 is an active-site residue.

The protein belongs to the CobB/CobQ family. CobQ subfamily.

It functions in the pathway cofactor biosynthesis; adenosylcobalamin biosynthesis. Functionally, catalyzes amidations at positions B, D, E, and G on adenosylcobyrinic A,C-diamide. NH(2) groups are provided by glutamine, and one molecule of ATP is hydrogenolyzed for each amidation. The polypeptide is Cobyric acid synthase (Anoxybacillus flavithermus (strain DSM 21510 / WK1)).